The following is a 538-amino-acid chain: Dolichol kinase (538 aa).

The Lumenal segment spans residues 1–13 (MTRECPSPAPGPG). A helical transmembrane segment spans residues 14 to 34 (APLSGSVLAEAAVVFAVVLSI). Residues 35 to 74 (HATVWDRYSWCAVALAVQAFYVQYKWDRLLQQGSAVFQFR) are Cytoplasmic-facing. Residues 75–95 (MSANSGLLPASMVMPLLGLVM) traverse the membrane as a helical segment. At 96-111 (KERCQTAGNPFFERFG) the chain is on the lumenal side. A helical transmembrane segment spans residues 112-132 (IVVAATGMAVALFSSVLALGI). The Cytoplasmic segment spans residues 133–134 (TR). Residues 135–155 (PVPTNTCVILGLAGGVIIYIM) traverse the membrane as a helical segment. Residues 156-163 (KHSLSVGE) are Lumenal-facing. The helical transmembrane segment at 164 to 184 (VIEVLEVLLIFVYLNMILLYL) threads the bilayer. The Cytoplasmic segment spans residues 185–188 (LPRC). The chain crosses the membrane as a helical span at residues 189–209 (FTPGEALLVLGGISFVLNQLI). The Lumenal segment spans residues 210 to 224 (KRSLTLVESQGDPVD). A helical membrane pass occupies residues 225–245 (FFLLVVVVGMVLMGIFFSTLF). Over 246 to 254 (VFMDSGTWA) the chain is Cytoplasmic. The helical transmembrane segment at 255–275 (SSIFFHLMTCVLSLGVVLPWL) threads the bilayer. The Lumenal portion of the chain corresponds to 276–297 (HRLIRRNPLLWLLQFLFQTDTR). The helical transmembrane segment at 298 to 318 (IYLLAYWSLLATLACLVVLYQ) threads the bilayer. At 319-337 (NAKRSSSESKKHQAPTIAR) the chain is on the cytoplasmic side. Residues 338–354 (KYFHLIVVATYIPGIIF) form a helical membrane-spanning segment. Residues 355–359 (DRPLL) are Lumenal-facing. The helical transmembrane segment at 360-380 (YVAATVCLAVFIFLEYVRYFR) threads the bilayer. The Cytoplasmic segment spans residues 381 to 401 (IKPLGHTLRSFLSLFLDERDS). Residues 402 to 422 (GPLILTHIYLLLGMSLPIWLI) traverse the membrane as a helical segment. Residues 423-436 (PRPCTQKGSLGGAR) lie on the Lumenal side of the membrane. Residues 437 to 457 (ALVPYAGVLAVGVGDTVASIF) form a helical membrane-spanning segment. Over 458-472 (GSTMGEIRWPGTKKT) the chain is Cytoplasmic. Residues 459–474 (STMGEIRWPGTKKTFE) are CTP-binding. The chain crosses the membrane as a helical span at residues 473 to 493 (FEGTMTSIFAQIISVALILIF). The Lumenal segment spans residues 494–495 (DS). Residues 496 to 516 (GVDLNYSYAWILGSISTVSLL) traverse the membrane as a helical segment. Over 517 to 538 (EAYTTQIDNLLLPLYLLILLMA) the chain is Cytoplasmic.

The protein belongs to the polyprenol kinase family. In terms of tissue distribution, ubiquitous.

Its subcellular location is the endoplasmic reticulum membrane. The enzyme catalyses a di-trans,poly-cis-dolichol + CTP = a di-trans,poly-cis-dolichyl phosphate + CDP + H(+). Its pathway is protein modification; protein glycosylation. Catalyzes CTP-mediated phosphorylation of dolichol, the terminal step in de novo dolichyl monophosphate (Dol-P) biosynthesis. Dol-P is a lipid carrier essential for the synthesis of N-linked and O-linked oligosaccharides and for GPI anchors. The chain is Dolichol kinase (DOLK) from Homo sapiens (Human).